A 559-amino-acid chain; its full sequence is Potassium-transporting ATPase potassium-binding subunit (559 aa).

13 consecutive transmembrane segments (helical) span residues 5–25 (GFLLIASFLLILLVLAKPLGS), 27–47 (LARLIAAVPLPGVAGVERILW), 63–83 (LLALLTLNLLGLGILFCLLFW), 132–152 (GLTVQNFLSAATGIAVVFALI), 170–190 (LVRITLWILFPVALIIALFFI), 253–273 (LAQMLAIFLIPAALCFAFGEA), 283–303 (LLWAMSFIFVVCVAVVMWAEV), 327–347 (FGVLASSLFAVVTTAASCGAV), 356–376 (ALGGMVPMWLMQIGEVVFGGV), 379–399 (GLYGMLLFVLLAVFIAGLMIG), 416–436 (MTALAILVTPMLVLLGSALAM), 484–504 (LLAFCMFVGRFGVIIPVMAIA), and 524–544 (GALFIGLLIGTVLLVGALTFI).

Belongs to the KdpA family. As to quaternary structure, the system is composed of three essential subunits: KdpA, KdpB and KdpC.

The protein resides in the cell inner membrane. Functionally, part of the high-affinity ATP-driven potassium transport (or Kdp) system, which catalyzes the hydrolysis of ATP coupled with the electrogenic transport of potassium into the cytoplasm. This subunit binds the periplasmic potassium ions and delivers the ions to the membrane domain of KdpB through an intramembrane tunnel. In Salmonella typhi, this protein is Potassium-transporting ATPase potassium-binding subunit.